Here is a 351-residue protein sequence, read N- to C-terminus: Paired box protein 2 homolog (351 aa).

Residues 91 to 217 (SHTGVNQLGG…SSINRIVRNK (127 aa)) constitute a DNA-binding region (paired). The segment at 94–150 (GVNQLGGVFVNGRPLPDTIRAQIVEMSQHGTRPCDISRQLKVSHGCVSKILGRYYST) is PAI subdomain. An RED subdomain region spans residues 169-217 (RVVECIAGYKRANPTMFAWEIRQKLIEDQICGEENVPSVSSINRIVRNK). A compositionally biased stretch (polar residues) spans 226–246 (PTSVTPSVARPSSATSQNQRS). The disordered stretch occupies residues 226–258 (PTSVTPSVARPSSATSQNQRSPPRGVQQHMQQS).

The protein resides in the nucleus. Its subcellular location is the chromosome. Transcription factor. Involved in negatively modulating apoptosis in germline and somatic cells, acting in partial redundancy with transcription factor egl-38/PAX5, probably by directly regulating transcription of apoptosis regulator ced-9. May bind to the DNA sequence motif 5'-GTAACG-3' in regulatory elements. The chain is Paired box protein 2 homolog from Caenorhabditis elegans.